Here is a 224-residue protein sequence, read N- to C-terminus: Synaptogyrin-2 (224 aa).

Met1 carries the N-acetylmethionine modification. Position 3 is a phosphoserine (Ser3). In terms of domain architecture, MARVEL spans 20 to 171; the sequence is FLSQPQVVTR…LASLAYQRYK (152 aa). 4 consecutive transmembrane segments (helical) span residues 31-51, 72-92, 105-125, and 147-167; these read VSMV…YTNI, SAIG…DAFF, VIGD…GFCF, and AAIT…SLAY.

Belongs to the synaptogyrin family. In terms of processing, may be tyrosine phosphorylated by Src.

It localises to the cytoplasmic vesicle membrane. Its subcellular location is the cytoplasmic vesicle. The protein resides in the secretory vesicle. The protein localises to the synaptic vesicle membrane. Its function is as follows. May play a role in regulated exocytosis. In neuronal cells, modulates the localization of synaptophysin/SYP into synaptic-like microvesicles and may therefore play a role in the formation and/or the maturation of this vesicles. May also play a role in GLUT4 storage and transport to the plasma membrane. This chain is Synaptogyrin-2, found in Mus musculus (Mouse).